Reading from the N-terminus, the 701-residue chain is Coiled-coil domain-containing protein 62 (701 aa).

2 coiled-coil regions span residues 61–197 (ETST…LQAR) and 241–342 (TCVV…QFLN). The interval 624–652 (KSAEREEESAALPDRRTSANEKDDFSPTS) is disordered. Over residues 636 to 648 (PDRRTSANEKDDF) the composition is skewed to basic and acidic residues. 2 short sequence motifs (LXXLL motif) span residues 654–658 (LQRLL) and 670–674 (LSTLL).

In terms of assembly, interacts with ESR1 and ESR2 in the presence of estradiol/E2. The interaction with ESR2 recruits CCDC62 to ER target genes, including cyclin-D1/CCND1 AP-1 promoter. Interacts with GOPC. In terms of tissue distribution, highly expressed in testis, not detected in other tissues (at protein level). Expressed at low levels in the epididymis, lung, spleen, bladder, kidney, liver, muscle.

The protein resides in the cytoplasm. It is found in the nucleus. It localises to the cytoplasmic vesicle. The protein localises to the secretory vesicle. Its subcellular location is the acrosome. In terms of biological role, nuclear receptor coactivator that can enhance preferentially estrogen receptors ESR1 and ESR2 transactivation. Also modulates progesterone/PGR, glucocorticoid/NR3C1 and androgen/AR receptors transactivation, although at lower level; little effect on vitamin D receptor/VDR. Required for normal spermiogenesis. It probably plays a role in acrosome formation. In Mus musculus (Mouse), this protein is Coiled-coil domain-containing protein 62 (Ccdc62).